Consider the following 407-residue polypeptide: Argininosuccinate synthase (407 aa).

Residues 13–21 (AYSGGLDTS) and alanine 40 contribute to the ATP site. L-citrulline-binding residues include tyrosine 91 and serine 96. Position 121 (glycine 121) interacts with ATP. L-aspartate is bound by residues threonine 123, asparagine 127, and aspartate 128. Residue asparagine 127 participates in L-citrulline binding. 5 residues coordinate L-citrulline: arginine 131, serine 182, serine 191, glutamate 267, and tyrosine 279.

It belongs to the argininosuccinate synthase family. Type 1 subfamily. As to quaternary structure, homotetramer.

It localises to the cytoplasm. The enzyme catalyses L-citrulline + L-aspartate + ATP = 2-(N(omega)-L-arginino)succinate + AMP + diphosphate + H(+). The protein operates within amino-acid biosynthesis; L-arginine biosynthesis; L-arginine from L-ornithine and carbamoyl phosphate: step 2/3. The polypeptide is Argininosuccinate synthase (Mesorhizobium japonicum (strain LMG 29417 / CECT 9101 / MAFF 303099) (Mesorhizobium loti (strain MAFF 303099))).